The following is a 319-amino-acid chain: Annexin A4 (319 aa).

At Ala-2 the chain carries N-acetylalanine. The residue at position 7 (Thr-7) is a Phosphothreonine. At Ser-12 the chain carries Phosphoserine. Annexin repeat units lie at residues 14-85 (FNAA…GMMT), 86-157 (PTVL…SLSA), 169-241 (ALMR…AIVK), and 245-316 (NKSA…ILCG). N6-acetyllysine is present on residues Lys-213, Lys-293, and Lys-300.

It belongs to the annexin family. As to quaternary structure, monomer. Binds to SFTPA1 in a Ca(2+)-dependent manner.

The protein resides in the zymogen granule membrane. Its function is as follows. May play a role in alveolar type II cells through interaction with the surfactant protein SFTPA1 (SP-A). The polypeptide is Annexin A4 (ANXA4) (Bos taurus (Bovine)).